We begin with the raw amino-acid sequence, 90 residues long: uncharacterized protein (90 aa).

This is an uncharacterized protein from Bos taurus (Bovine).